The chain runs to 231 residues: Allergen Ani s 10 (231 aa).

The first 19 residues, 1–19, serve as a signal peptide directing secretion; it reads MHLITALVLLLQLIHFITS. 7 consecutive repeat copies span residues 28–56, 57–85, 86–114, 115–143, 144–172, 173–201, and 204–231. The 6 X 29 AA tandem repeats of [EG]-G-P-G-P-V-[IV]-[SG]-G-S-G-I-G-[ND]-V-W-[NE]-K-A-N-E-[QP]-A-[AE]-[QEH]-Q-[EQ]-[NS]-I stretch occupies residues 28–201; the sequence is GGPGPVVGGS…NEQAAEQQNI (174 aa). Disordered stretches follow at residues 107 to 126 and 134 to 231; these read QAAH…GSGI and NEQA…SMQA. 3 stretches are compositionally biased toward low complexity: residues 114 to 123, 143 to 152, and 177 to 187; these read IEGPGPVVSG and PVISGSGIGNV.

This Anisakis simplex (Herring worm) protein is Allergen Ani s 10.